Reading from the N-terminus, the 360-residue chain is Phospho-N-acetylmuramoyl-pentapeptide-transferase (360 aa).

The next 10 membrane-spanning stretches (helical) occupy residues 24-44 (RAVM…PWTI), 69-89 (GTPT…TLLW), 92-112 (WANP…ALGF), 133-153 (MVWQ…LAAN), 158-178 (ILIV…GFLV), 199-219 (GLAT…AYVS), 239-259 (VAIF…FNAY), 263-283 (VFMG…VAVI), 288-308 (FVLV…MLQV), and 337-357 (QVVV…LSTL).

This sequence belongs to the glycosyltransferase 4 family. MraY subfamily. Requires Mg(2+) as cofactor.

It localises to the cell inner membrane. It carries out the reaction UDP-N-acetyl-alpha-D-muramoyl-L-alanyl-gamma-D-glutamyl-meso-2,6-diaminopimeloyl-D-alanyl-D-alanine + di-trans,octa-cis-undecaprenyl phosphate = di-trans,octa-cis-undecaprenyl diphospho-N-acetyl-alpha-D-muramoyl-L-alanyl-D-glutamyl-meso-2,6-diaminopimeloyl-D-alanyl-D-alanine + UMP. It participates in cell wall biogenesis; peptidoglycan biosynthesis. In terms of biological role, catalyzes the initial step of the lipid cycle reactions in the biosynthesis of the cell wall peptidoglycan: transfers peptidoglycan precursor phospho-MurNAc-pentapeptide from UDP-MurNAc-pentapeptide onto the lipid carrier undecaprenyl phosphate, yielding undecaprenyl-pyrophosphoryl-MurNAc-pentapeptide, known as lipid I. The polypeptide is Phospho-N-acetylmuramoyl-pentapeptide-transferase (Neisseria meningitidis serogroup C (strain 053442)).